A 624-amino-acid polypeptide reads, in one-letter code: DNA mismatch repair protein MutL (624 aa).

It belongs to the DNA mismatch repair MutL/HexB family.

Functionally, this protein is involved in the repair of mismatches in DNA. It is required for dam-dependent methyl-directed DNA mismatch repair. May act as a 'molecular matchmaker', a protein that promotes the formation of a stable complex between two or more DNA-binding proteins in an ATP-dependent manner without itself being part of a final effector complex. The sequence is that of DNA mismatch repair protein MutL from Xanthomonas campestris pv. campestris (strain B100).